The primary structure comprises 313 residues: Trimeric intracellular cation channel type 1B.2 (313 aa).

Residues 1-28 (MGWVPDEWSIDHDTLIDAGGYVQKLKLY) lie on the Lumenal side of the membrane. Residues 29–48 (PYFDAAHYVLTCLSVRHDLG) traverse the membrane as a helical segment. Residues 49 to 57 (PDAISFSRK) are Cytoplasmic-facing. The discontinuously helical transmembrane segment at 58–82 (HPFSCWLSCMLMSFAGSFLSCFLLG) threads the bilayer. At 83-90 (EPIISPLK) the chain is on the lumenal side. A helical membrane pass occupies residues 91–108 (QHADILLGSIVWYLVFYS). The Cytoplasmic portion of the chain corresponds to 109–118 (PFDVVFRLAT). A helical transmembrane segment spans residues 119 to 149 (WFPVKLGLSVLKEVQRTHKIAAGVKHAVRIY). The a 1,2-diacyl-sn-glycero-3-phospho-(1D-myo-inositol-4,5-bisphosphate) site is built by Lys130 and Arg134. Topologically, residues 150 to 151 (PE) are lumenal. A discontinuously helical membrane pass occupies residues 152 to 178 (SYLVQILVGVAKGAGSGVVKIVEQLAR). An a 1,2-diacyl-sn-glycero-3-phospho-(1D-myo-inositol-4,5-bisphosphate)-binding site is contributed by Gly168. The Cytoplasmic portion of the chain corresponds to 179 to 192 (GTWHPTNHEILRPS). Residues 193-210 (FTTKACVIASIVFTLERH) traverse the membrane as a helical segment. At 211–216 (SMYVTA) the chain is on the lumenal side. The helical transmembrane segment at 217–239 (PHDLVYLCVVGFFIYFKLASLCL) threads the bilayer. The Cytoplasmic segment spans residues 240-313 (SVHDVLMPIE…MSNGTDKKNN (74 aa)).

This sequence belongs to the TMEM38 family. As to quaternary structure, homotrimer; trimerization probably requires binding to phosphatidylinositol 4,5-bisphosphate (PIP2).

It localises to the endoplasmic reticulum membrane. In terms of biological role, potassium channel that mediates transmembrane potassium transport. Might be required for maintenance of rapid intracellular calcium release. May act as a potassium counter-ion channel that functions in synchronization with calcium release from intracellular stores. Binds phosphatidylinositol 4,5-bisphosphate (PIP2). The polypeptide is Trimeric intracellular cation channel type 1B.2 (Caenorhabditis elegans).